A 438-amino-acid polypeptide reads, in one-letter code: MESQQLHQNPRSLHGSAYASVTSKEVPSNQDPLAVSASNLPEFDRDSTKVNSQQETTPGTSAVPENHHHVSPQPASVPPPQNGQYQQHGMMTPNKAMASNWAHYQQPSMMTCSHYQTSPAYYQPDPHYPLPQYIPPLSTSSPDPIDSQNQHSEVPQAETKVRNNVLPPHTLTSEENFSTWVKFYIRFLKNSNLGDIIPNDQGEIKRQMTYEEHAYIYNTFQAFAPFHLLPTWVKQILEINYADILTVLCKSVSKMQTNNQELKDWIALANLEYDGSTSADTFEITVSTIIQRLKENNINVSDRLACQLILKGLSGDFKYLRNQYRTKTNMKLSQLFAEIQLIYDENKIMNLNKPSQYKQHSEYKNVSRTSPNTTNTKVTTRNYQRTNSSKPRAAKAHNIATSSKFSRVNNDHINESTVSSQYLSDDNELSLRPATERI.

Polar residues-rich tracts occupy residues 1–11 (MESQQLHQNPR), 19–39 (ASVTSKEVPSNQDPLAVSASN), and 49–60 (KVNSQQETTPGT). 3 disordered regions span residues 1–88 (MESQ…YQQH), 365–397 (NVSRTSPNTTNTKVTTRNYQRTNSSKPRAAKAH), and 419–438 (SSQYLSDDNELSLRPATERI). The RNA-binding stretch occupies residues 295–397 (ENNINVSDRL…SSKPRAAKAH (103 aa)). Over residues 369-382 (TSPNTTNTKVTTRN) the composition is skewed to low complexity.

In terms of assembly, homotrimer.

The protein localises to the cytoplasm. Its function is as follows. Capsid protein (CA) is the structural component of the virus-like particle (VLP), forming the shell that encapsulates the retrotransposons dimeric RNA genome. The particles are assembled from trimer-clustered units and there are holes in the capsid shells that allow for the diffusion of macromolecules. CA also has nucleocapsid-like chaperone activity, promoting primer tRNA(i)-Met annealing to the multipartite primer-binding site (PBS), dimerization of Ty2 RNA and initiation of reverse transcription. The protein is Transposon Ty2-C Gag polyprotein (TY2A-C) of Saccharomyces cerevisiae (strain ATCC 204508 / S288c) (Baker's yeast).